The following is a 264-amino-acid chain: Thymidylate synthase (264 aa).

Arg21 is a binding site for dUMP. Residue His51 participates in (6R)-5,10-methylene-5,6,7,8-tetrahydrofolate binding. Position 126-127 (Arg126–Arg127) interacts with dUMP. The Nucleophile role is filled by Cys146. Residues Arg166–Asp169, Asn177, and His207–Tyr209 contribute to the dUMP site. Asp169 contacts (6R)-5,10-methylene-5,6,7,8-tetrahydrofolate. Ala263 contacts (6R)-5,10-methylene-5,6,7,8-tetrahydrofolate.

The protein belongs to the thymidylate synthase family. Bacterial-type ThyA subfamily. As to quaternary structure, homodimer.

It is found in the cytoplasm. It carries out the reaction dUMP + (6R)-5,10-methylene-5,6,7,8-tetrahydrofolate = 7,8-dihydrofolate + dTMP. It participates in pyrimidine metabolism; dTTP biosynthesis. Catalyzes the reductive methylation of 2'-deoxyuridine-5'-monophosphate (dUMP) to 2'-deoxythymidine-5'-monophosphate (dTMP) while utilizing 5,10-methylenetetrahydrofolate (mTHF) as the methyl donor and reductant in the reaction, yielding dihydrofolate (DHF) as a by-product. This enzymatic reaction provides an intracellular de novo source of dTMP, an essential precursor for DNA biosynthesis. The polypeptide is Thymidylate synthase (Ruminiclostridium cellulolyticum (strain ATCC 35319 / DSM 5812 / JCM 6584 / H10) (Clostridium cellulolyticum)).